Consider the following 238-residue polypeptide: Purine nucleoside phosphorylase DeoD-type (238 aa).

His4 is an a purine D-ribonucleoside binding site. Residues Gly20, Arg24, Arg43, and Arg87 to Thr90 each bind phosphate. Residues Glu179–Glu181 and Ser203–Asn204 each bind a purine D-ribonucleoside.

Belongs to the PNP/UDP phosphorylase family. Homohexamer; trimer of homodimers.

The enzyme catalyses a purine D-ribonucleoside + phosphate = a purine nucleobase + alpha-D-ribose 1-phosphate. The catalysed reaction is a purine 2'-deoxy-D-ribonucleoside + phosphate = a purine nucleobase + 2-deoxy-alpha-D-ribose 1-phosphate. Catalyzes the reversible phosphorolytic breakdown of the N-glycosidic bond in the beta-(deoxy)ribonucleoside molecules, with the formation of the corresponding free purine bases and pentose-1-phosphate. This Lacticaseibacillus casei (strain BL23) (Lactobacillus casei) protein is Purine nucleoside phosphorylase DeoD-type.